The primary structure comprises 169 residues: Mitochondrial ATP-independent inner membrane protease subunit 1b (169 aa).

Catalysis depends on residues Ser47 and Lys91.

This sequence belongs to the peptidase S26 family. IMP1 subfamily. As to quaternary structure, heterodimer of 2 subunits, IMP1A/B and IMP12.

It localises to the mitochondrion inner membrane. Catalyzes the removal of transit peptides required for the targeting of proteins from the mitochondrial matrix, across the inner membrane, into the inter-membrane space. This is Mitochondrial ATP-independent inner membrane protease subunit 1b from Arabidopsis thaliana (Mouse-ear cress).